The sequence spans 278 residues: Energy-coupling factor transporter ATP-binding protein EcfA (278 aa).

The ABC transporter domain occupies leucine 4–arginine 239. An ATP-binding site is contributed by glycine 37–serine 44.

The protein belongs to the ABC transporter superfamily. Energy-coupling factor EcfA family. As to quaternary structure, forms a stable energy-coupling factor (ECF) transporter complex composed of 2 membrane-embedded substrate-binding proteins (S component), 2 ATP-binding proteins (A component) and 2 transmembrane proteins (T component).

It localises to the cell membrane. In terms of biological role, ATP-binding (A) component of a common energy-coupling factor (ECF) ABC-transporter complex. Unlike classic ABC transporters this ECF transporter provides the energy necessary to transport a number of different substrates. This is Energy-coupling factor transporter ATP-binding protein EcfA from Methanococcus maripaludis (strain DSM 14266 / JCM 13030 / NBRC 101832 / S2 / LL).